The chain runs to 273 residues: NADPH-dependent 7-cyano-7-deazaguanine reductase (273 aa).

80–82 (VES) lines the substrate pocket. Residue 82–83 (SK) coordinates NADPH. The active-site Thioimide intermediate is the cysteine 180. The active-site Proton donor is the aspartate 187. 219–220 (HE) contacts substrate. Residue 248–249 (RG) coordinates NADPH.

The protein belongs to the GTP cyclohydrolase I family. QueF type 2 subfamily. As to quaternary structure, homodimer.

The protein resides in the cytoplasm. The catalysed reaction is 7-aminomethyl-7-carbaguanine + 2 NADP(+) = 7-cyano-7-deazaguanine + 2 NADPH + 3 H(+). The protein operates within tRNA modification; tRNA-queuosine biosynthesis. Its function is as follows. Catalyzes the NADPH-dependent reduction of 7-cyano-7-deazaguanine (preQ0) to 7-aminomethyl-7-deazaguanine (preQ1). The polypeptide is NADPH-dependent 7-cyano-7-deazaguanine reductase (Bordetella parapertussis (strain 12822 / ATCC BAA-587 / NCTC 13253)).